A 322-amino-acid chain; its full sequence is MKIVVLDGYCLNPGDLDWKGLEALGECIVYDRTSLTDMEEVISRIGDADIVYTNKTPMPREVFEKCPNIRFVGVLATGYNVVDVNTAKEKGIPVANIPTYGTASVGQFAIALLLEICHHVGHHNQVVHEGKWESNPDWCFWDYPLIELDGKNMGIIGYGRIGQATGKIAQALGMKVLAYDAYKNPALENENCRYVELDELLSQSDVIALHCPLFPETEGIVNKENIAKMKDGVIILNNSRGPLIVEQDLVDALNSGKVAAAGLDVVSTEPIKGDNPLLGAKNCIITPHISWAPKESRKRLMDIAVNNLEEFLKGSPVNVVNK.

Residues 160–161 (RI), Asp180, 211–212 (CP), 238–240 (NSR), and Asp264 each bind NAD(+). Residue Arg240 is part of the active site. Residue Glu269 is part of the active site. His288 serves as the catalytic Proton donor.

Belongs to the D-isomer specific 2-hydroxyacid dehydrogenase family.

It catalyses the reaction (R)-glycerate + NAD(+) = 3-hydroxypyruvate + NADH + H(+). Its pathway is carbohydrate metabolism. Involved in catabolism of D-apiose. Catalyzes the reduction of 3-hydroxypyruvate to glycerate. This Blautia hydrogenotrophica (strain DSM 10507 / JCM 14656 / S5a33) (Ruminococcus hydrogenotrophicus) protein is Hydroxypyruvate reductase.